The following is a 332-amino-acid chain: Glycerol-3-phosphate dehydrogenase [NAD(P)+] (332 aa).

3 residues coordinate NADPH: Trp-13, Lys-34, and Lys-108. Sn-glycerol 3-phosphate contacts are provided by Lys-108, Gly-136, and Ser-138. Ala-140 lines the NADPH pocket. Sn-glycerol 3-phosphate is bound by residues Lys-191, Asp-244, Ser-254, Arg-255, and Asn-256. Lys-191 (proton acceptor) is an active-site residue. Arg-255 provides a ligand contact to NADPH. NADPH-binding residues include Val-279 and Glu-281.

This sequence belongs to the NAD-dependent glycerol-3-phosphate dehydrogenase family.

Its subcellular location is the cytoplasm. It catalyses the reaction sn-glycerol 3-phosphate + NAD(+) = dihydroxyacetone phosphate + NADH + H(+). The catalysed reaction is sn-glycerol 3-phosphate + NADP(+) = dihydroxyacetone phosphate + NADPH + H(+). Its pathway is membrane lipid metabolism; glycerophospholipid metabolism. Functionally, catalyzes the reduction of the glycolytic intermediate dihydroxyacetone phosphate (DHAP) to sn-glycerol 3-phosphate (G3P), the key precursor for phospholipid synthesis. In Francisella tularensis subsp. novicida (strain U112), this protein is Glycerol-3-phosphate dehydrogenase [NAD(P)+].